Here is a 116-residue protein sequence, read N- to C-terminus: MVPKPLSLLLFLLLALSAAVVGGRKLVAAGGWRPIESLNSAEVQDVAQFAVSEHNKQANDELQYQSVVRGYTQVVAGTNYRLVIAAKDGAVVGNYEAVVWDKPWMHFRNLTSFRKV.

Positions 1–26 are cleaved as a signal peptide; sequence MVPKPLSLLLFLLLALSAAVVGGRKL. Positions 30–89 constitute a Cystatin domain; it reads GGWRPIESLNSAEVQDVAQFAVSEHNKQANDELQYQSVVRGYTQVVAGTNYRLVIAAKDG. A Secondary area of contact motif is present at residues 73-77; the sequence is QVVAG. The N-linked (GlcNAc...) asparagine glycan is linked to Asn109.

This sequence belongs to the cystatin family. Phytocystatin subfamily. Glycosylated.

It localises to the secreted. Its function is as follows. Specific inhibitor of papain family cysteine proteinases. Inhibits papain, chymopapain, bromelain, ficin, human cathepsins B, H and L, actinidain and house dustmite endopeptidase 1, but does not inhibit human bleomycin hydrolase. Inhibits papain with an IC(50) of 2.47 nM. Does not inhibit cysteine proteinases belonging to other families including clostripain, streptopain and calpain. This Actinidia deliciosa (Kiwi) protein is Cysteine proteinase inhibitor 1.